The following is a 35-amino-acid chain: N-acylglucosamine 2-epimerase (35 aa).

Residues 1-21 (LNLVDQLGEADEELAGTYAEL) form a leucine-zipper region.

Belongs to the N-acylglucosamine 2-epimerase family. Homodimer. Forms a heterodimer with renin and inhibits its activity.

It carries out the reaction an N-acyl-D-glucosamine = an N-acyl-D-mannosamine. Its pathway is amino-sugar metabolism; N-acetylneuraminate degradation. Its function is as follows. Catalyzes the interconversion of N-acetylglucosamine to N-acetylmannosamine. Involved in the N-glycolylneuraminic acid (Neu5Gc) degradation pathway. The sequence is that of N-acylglucosamine 2-epimerase from Canis lupus familiaris (Dog).